Here is a 96-residue protein sequence, read N- to C-terminus: Mitochondrial import inner membrane translocase subunit Tim13-A (96 aa).

A Twin CX3C motif motif is present at residues 47-70 (CFRKCIGKPGGSLDNSEQKCIAMC). Cystine bridges form between Cys47–Cys70 and Cys51–Cys66.

The protein belongs to the small Tim family. In terms of assembly, heterohexamer; composed of 3 copies of TIMM8 (TIMM8A or TIMM8B) and 3 copies of TIMM13, named soluble 70 kDa complex. Associates with the TIM22 complex, whose core is composed of TIMM22.

The protein resides in the mitochondrion inner membrane. Functionally, mitochondrial intermembrane chaperone that participates in the import and insertion of some multi-pass transmembrane proteins into the mitochondrial inner membrane. Also required for the transfer of beta-barrel precursors from the TOM complex to the sorting and assembly machinery (SAM complex) of the outer membrane. Acts as a chaperone-like protein that protects the hydrophobic precursors from aggregation and guide them through the mitochondrial intermembrane space. The TIMM8-TIMM13 complex mediates the import of some proteins while the predominant TIMM9-TIMM10 70 kDa complex mediates the import of much more proteins. This is Mitochondrial import inner membrane translocase subunit Tim13-A (timm13-a) from Xenopus laevis (African clawed frog).